The following is a 170-amino-acid chain: Adenine phosphoribosyltransferase (170 aa).

It belongs to the purine/pyrimidine phosphoribosyltransferase family. As to quaternary structure, homodimer.

Its subcellular location is the cytoplasm. It catalyses the reaction AMP + diphosphate = 5-phospho-alpha-D-ribose 1-diphosphate + adenine. It functions in the pathway purine metabolism; AMP biosynthesis via salvage pathway; AMP from adenine: step 1/1. In terms of biological role, catalyzes a salvage reaction resulting in the formation of AMP, that is energically less costly than de novo synthesis. This is Adenine phosphoribosyltransferase from Oceanobacillus iheyensis (strain DSM 14371 / CIP 107618 / JCM 11309 / KCTC 3954 / HTE831).